The sequence spans 265 residues: Lipopolysaccharide core heptose(I) kinase WaaP (265 aa).

D162 is an active-site residue.

The protein belongs to the protein kinase superfamily. KdkA/RfaP family. Requires Mg(2+) as cofactor.

Its subcellular location is the cell inner membrane. The enzyme catalyses an L-alpha-D-Hep-(1-&gt;3)-L-alpha-D-Hep-(1-&gt;5)-[alpha-Kdo-(2-&gt;4)]-alpha-Kdo-(2-&gt;6)-lipid A + ATP = an L-alpha-D-Hep-(1-&gt;3)-4-O-phospho-L-alpha-D-Hep-(1-&gt;5)-[alpha-Kdo-(2-&gt;4)]-alpha-Kdo-(2-&gt;6)-lipid A + ADP + H(+). It carries out the reaction L-alpha-D-Hep-(1-&gt;3)-L-alpha-D-Hep-(1-&gt;5)-[alpha-Kdo-(2-&gt;4)]-alpha-Kdo-(2-&gt;6)-lipid A (E. coli) + ATP = L-alpha-D-Hep-(1-&gt;3)-4-O-phospho-L-alpha-D-Hep-(1-&gt;5)-[alpha-Kdo-(2-&gt;4)]-alpha-Kdo-(2-&gt;6)-lipid A (E. coli) + ADP + H(+). The protein operates within bacterial outer membrane biogenesis; LPS core biosynthesis. Its function is as follows. Kinase involved in the biosynthesis of the core oligosaccharide region of lipopolysaccharide (LPS). Catalyzes the phosphorylation of heptose I (HepI), the first heptose added to the Kdo2-lipid A module. This Escherichia coli protein is Lipopolysaccharide core heptose(I) kinase WaaP.